The chain runs to 96 residues: Co-chaperonin GroES (96 aa).

This sequence belongs to the GroES chaperonin family. As to quaternary structure, heptamer of 7 subunits arranged in a ring. Interacts with the chaperonin GroEL.

It is found in the cytoplasm. Its function is as follows. Together with the chaperonin GroEL, plays an essential role in assisting protein folding. The GroEL-GroES system forms a nano-cage that allows encapsulation of the non-native substrate proteins and provides a physical environment optimized to promote and accelerate protein folding. GroES binds to the apical surface of the GroEL ring, thereby capping the opening of the GroEL channel. This is Co-chaperonin GroES from Geotalea uraniireducens (strain Rf4) (Geobacter uraniireducens).